The primary structure comprises 529 residues: Bifunctional purine biosynthesis protein PurH (529 aa).

One can recognise an MGS-like domain in the interval 1–148; the sequence is MQQRRPVRRA…KNHKDVAIVV (148 aa).

The protein belongs to the PurH family.

The enzyme catalyses (6R)-10-formyltetrahydrofolate + 5-amino-1-(5-phospho-beta-D-ribosyl)imidazole-4-carboxamide = 5-formamido-1-(5-phospho-D-ribosyl)imidazole-4-carboxamide + (6S)-5,6,7,8-tetrahydrofolate. It catalyses the reaction IMP + H2O = 5-formamido-1-(5-phospho-D-ribosyl)imidazole-4-carboxamide. Its pathway is purine metabolism; IMP biosynthesis via de novo pathway; 5-formamido-1-(5-phospho-D-ribosyl)imidazole-4-carboxamide from 5-amino-1-(5-phospho-D-ribosyl)imidazole-4-carboxamide (10-formyl THF route): step 1/1. It participates in purine metabolism; IMP biosynthesis via de novo pathway; IMP from 5-formamido-1-(5-phospho-D-ribosyl)imidazole-4-carboxamide: step 1/1. The protein is Bifunctional purine biosynthesis protein PurH of Klebsiella pneumoniae (strain 342).